A 403-amino-acid chain; its full sequence is S-adenosylmethionine synthase (403 aa).

Histidine 15 contacts ATP. A Mg(2+)-binding site is contributed by aspartate 17. K(+) is bound at residue glutamate 43. 2 residues coordinate L-methionine: glutamate 56 and glutamine 99. Positions 99 to 109 (QSPDINQGVDR) are flexible loop. ATP is bound by residues 166–168 (DAK), 232–233 (KF), aspartate 241, 247–248 (RK), alanine 264, and lysine 268. Position 241 (aspartate 241) interacts with L-methionine. Lysine 272 is a binding site for L-methionine.

The protein belongs to the AdoMet synthase family. Homotetramer; dimer of dimers. Requires Mg(2+) as cofactor. The cofactor is K(+).

Its subcellular location is the cytoplasm. It catalyses the reaction L-methionine + ATP + H2O = S-adenosyl-L-methionine + phosphate + diphosphate. It participates in amino-acid biosynthesis; S-adenosyl-L-methionine biosynthesis; S-adenosyl-L-methionine from L-methionine: step 1/1. In terms of biological role, catalyzes the formation of S-adenosylmethionine (AdoMet) from methionine and ATP. The overall synthetic reaction is composed of two sequential steps, AdoMet formation and the subsequent tripolyphosphate hydrolysis which occurs prior to release of AdoMet from the enzyme. The polypeptide is S-adenosylmethionine synthase (Xanthomonas axonopodis pv. citri (strain 306)).